The primary structure comprises 1231 residues: Alpha-protein kinase 1 (1231 aa).

ADP-D-glycero-beta-D-manno-heptose is bound by residues Phe61, Gln67, Arg116, Arg150–Arg153, Asp231, Lys233, Ser236–Thr237, and Phe295. 6 disordered regions span residues Glu508 to Thr540, Gly609 to Ala637, Gly692 to Pro739, Thr767 to Gln791, Pro811 to Gly843, and Ala859 to Asp888. Positions Arg509–Lys522 are enriched in polar residues. Basic and acidic residues predominate over residues Ser524–Arg537. Residues Ser700 to Ser714 are compositionally biased toward low complexity. Acidic residues predominate over residues Pro775–Asp784. The 221-residue stretch at Lys1003–Pro1223 folds into the Alpha-type protein kinase domain.

It belongs to the protein kinase superfamily. Alpha-type protein kinase family. ALPK subfamily. In terms of tissue distribution, widely expressed. Expressed in the retina and in sweat glands, especially in the myoepithelial cells.

Its subcellular location is the cytoplasm. It localises to the cytosol. It is found in the cytoskeleton. The protein localises to the spindle pole. The protein resides in the microtubule organizing center. Its subcellular location is the centrosome. It localises to the cell projection. It is found in the cilium. The enzyme catalyses L-seryl-[protein] + ATP = O-phospho-L-seryl-[protein] + ADP + H(+). It catalyses the reaction L-threonyl-[protein] + ATP = O-phospho-L-threonyl-[protein] + ADP + H(+). With respect to regulation, serine/threonine-protein kinase activity is stimulated upon ADP-D-glycero-beta-D-manno-heptose (ADP-Heptose)-binding. Serine/threonine-protein kinase that detects bacterial pathogen-associated molecular pattern metabolites (PAMPs) and initiates an innate immune response, a critical step for pathogen elimination and engagement of adaptive immunity. Specifically recognizes and binds ADP-D-glycero-beta-D-manno-heptose (ADP-Heptose), a potent PAMP present in all Gram-negative and some Gram-positive bacteria. ADP-Heptose-binding stimulates its kinase activity to phosphorylate and activate TIFA, triggering pro-inflammatory NF-kappa-B signaling. May be involved in monosodium urate monohydrate (MSU)-induced inflammation by mediating phosphorylation of unconventional myosin MYO9A. May also play a role in apical protein transport by mediating phosphorylation of unconventional myosin MYO1A. May play a role in ciliogenesis. This Mus musculus (Mouse) protein is Alpha-protein kinase 1.